Consider the following 405-residue polypeptide: MFDTEDVGVFLGLDVGKTAHHGHGLTPAGKKVLDKQLPNSEPRLRAVFDKLAAKFGTVLVIVDQPASIGALPLTVARDAGCKVAYLPGLAMRRIADLYPGEAKTDAKDAAVIADAARTMAHTLRSLELTDEITAELSVLVGFDQDLAAEATRTSNRIRGLLTQFHPSLERVLGPRLDHQAVTWLLERYGSPAALRKAGRRRLVELVRPKAPRMAQRLIDDIFDALDEQTVVVPGTGTLDIVVPSLASSLTAVHEQRRALEAQINALLEAHPLSPVLTSMPGVGVRTAAVLLVTVGDGTSFPTAAHLASYAGLAPTTKSSGTSIHGEHAPRGGNRQLKRAMFLSAFACMNADPASRTYYDRQRARGKTHTQALLRLARQRISVLFAMLRDGTFYESRMPAGVELAA.

The sequence is that of Insertion element IS110 uncharacterized 43.6 kDa protein from Streptomyces coelicolor (strain ATCC BAA-471 / A3(2) / M145).